A 159-amino-acid polypeptide reads, in one-letter code: MASPQPPFGGGSNSNSNTASPSNNLSPTASPLLEGRDSPNLPLTMTASTVLMTLPRDATAALAEAGKFGQEKVVIRFKPVGSAPALRREQVKVSSTERFDTVMTYIRKTLKCRESDSVFLYVNSVFAPALDEVVGNLWRCFKDSTNQLNVSYSMTPSFG.

The tract at residues 1-40 is disordered; sequence MASPQPPFGGGSNSNSNTASPSNNLSPTASPLLEGRDSPN. Residues 13–27 are compositionally biased toward low complexity; that stretch reads NSNSNTASPSNNLSP. Gly159 is covalently cross-linked (Glycyl lysine isopeptide (Gly-Lys) (interchain with K-218 in ATG5)).

The protein belongs to the ATG12 family. Forms a conjugate with ATG5. Forms a thioester bond with the 'Cys-116' of ATG10. Interacts with the ATG7 C-terminal 40 amino acids domain. The ATG12-ATG5 conjugate forms a complex with several units of ATG16. The ATG12-ATG5 conjugate also associates with ATG3.

Its subcellular location is the preautophagosomal structure membrane. It localises to the cytoplasm. Functionally, ubiquitin-like protein involved in cytoplasm to vacuole transport (Cvt), autophagy vesicles formation, mitophagy, and nucleophagy. Conjugation with ATG5 through a ubiquitin-like conjugating system involving also ATG7 as an E1-like activating enzyme and ATG10 as an E2-like conjugating enzyme, is essential for its function. The ATG12-ATG5 conjugate acts as an E3-like enzyme which is required for lipidation of ATG8 and ATG8 association to the vesicle membranes. ATG12-ATG5 rearranges the ATG3 catalytic center and enhances its E2 activity. Plays a role in sexual development and perithecia formation. This Sordaria macrospora (strain ATCC MYA-333 / DSM 997 / K(L3346) / K-hell) protein is Ubiquitin-like protein ATG12.